The chain runs to 944 residues: Trehalose monomycolate exporter MmpL3 (944 aa).

Residues 1-13 are Cytoplasmic-facing; it reads MFAWWGRTVYRYR. Residues 14 to 34 form a helical membrane-spanning segment; that stretch reads FIVIGVMVALCLGGGVFGLSL. The Periplasmic segment spans residues 35–185; it reads GKHVTQSGFY…TIATDQRRME (151 aa). 40-44 contacts a 1,2-diacylglycero-3-phosphoethanolamine; it reads QSGFY. The chain crosses the membrane as a helical span at residues 186-206; sequence VLALPLVAVVLFFVFGGVIAA. Residues 207 to 209 lie on the Cytoplasmic side of the membrane; the sequence is GLP. Residues 210 to 230 traverse the membrane as a helical segment; sequence VMVGGLCIAGALGIMRFLAIF. The Periplasmic segment spans residues 231 to 235; it reads GPVHY. A helical membrane pass occupies residues 236–256; the sequence is FAQPVVSLIGLGIAIDYGLFI. The Cytoplasmic portion of the chain corresponds to 257-286; it reads VSRFREEIAEGYDTETAVRRTVITAGRTVT. Residues 287–307 form a helical membrane-spanning segment; sequence FSAVLIVASAIGLLLFPQGFL. Residues 308–314 are Periplasmic-facing; it reads KSLTYAT. A helical transmembrane segment spans residues 315–335; sequence IASVMLSAILSITVLPACLGI. The Cytoplasmic segment spans residues 336–396; sequence LGKHVDALGV…KLVNRVMKRP (61 aa). The helical transmembrane segment at 397 to 417 threads the bilayer; sequence VLFAAPIVIIMILLIIPVGKL. Residues 418 to 562 lie on the Periplasmic side of the membrane; it reads SLGGISEKYL…HGLFAKMPLM (145 aa). The chain crosses the membrane as a helical span at residues 563–583; the sequence is VVILLTTTIVLMFLAFGSVVL. Over 584 to 586 the chain is Cytoplasmic; it reads PIK. A helical transmembrane segment spans residues 587-607; the sequence is ATLMSALTLGSTMGILTWIFV. The Periplasmic segment spans residues 608 to 616; that stretch reads DGHFSKWLN. The chain crosses the membrane as a helical span at residues 617-637; sequence FTPTPLTAPVIGLIIALVFGL. Topologically, residues 638 to 672 are cytoplasmic; sequence STDYEVFLVSRMVEARERGMSTQEAIRIGTAATGR. The chain crosses the membrane as a helical span at residues 673–693; it reads IITAAALIVAVVAGAFVFSDL. Residues 694 to 698 lie on the Periplasmic side of the membrane; it reads VMMKY. The chain crosses the membrane as a helical span at residues 699-719; sequence LAFGLMAALLLDATVVRMFLV. The Cytoplasmic segment spans residues 720–944; it reads PSVMKLLGDD…QDLLRREGRL (225 aa). Residues 778–944 are disordered; sequence AAGDPRPPHD…QDLLRREGRL (167 aa). A compositionally biased stretch (low complexity) spans 791 to 828; that stretch reads PLAESPRPARSSPASSPELTPALEATAAPAAPSGASTT. Positions 829 to 839 are enriched in polar residues; it reads RMQIGSSTEPP. Residues 855–866 are compositionally biased toward pro residues; that stretch reads STPPPTPTPPSA.

The protein belongs to the resistance-nodulation-cell division (RND) (TC 2.A.6) family. MmpL subfamily. In terms of assembly, monomer. Interacts with TtfA (via N-terminus); active trehalose monomycolate (TMM) biosynthesis is not required for the complex formation.

The protein resides in the cell inner membrane. Its subcellular location is the cell septum. It is found in the cell tip. Transports trehalose monomycolate (TMM) to the cell wall. Flips TMM across the inner membrane. Membrane potential is not required for this function. Transports probably phosphatidylethanolamine (PE) as well. Binds specifically both TMM and PE, but not trehalose dimycolate (TDM). Also binds diacylglycerol (DAG) and other phospholipids, including phosphatidylglycerol (PG), phosphatidylinositol (PI), and cardiolipin (CDL). Contributes to membrane potential, cell wall composition, antibiotic susceptibility and fitness. Could also be part of a heme-iron acquisition system. This Mycobacterium tuberculosis (strain CDC 1551 / Oshkosh) protein is Trehalose monomycolate exporter MmpL3 (mmpL3).